Consider the following 76-residue polypeptide: Acyl carrier protein (76 aa).

Residues 1–75 (MIFEKIKDLI…DIVFYITKNT (75 aa)) form the Carrier domain. Position 35 is an O-(pantetheine 4'-phosphoryl)serine (serine 35).

Belongs to the acyl carrier protein (ACP) family. In terms of processing, 4'-phosphopantetheine is transferred from CoA to a specific serine of apo-ACP by AcpS. This modification is essential for activity because fatty acids are bound in thioester linkage to the sulfhydryl of the prosthetic group.

The protein localises to the cytoplasm. Its pathway is lipid metabolism; fatty acid biosynthesis. Its function is as follows. Carrier of the growing fatty acid chain in fatty acid biosynthesis. This chain is Acyl carrier protein, found in Aster yellows witches'-broom phytoplasma (strain AYWB).